A 200-amino-acid chain; its full sequence is Recombination protein RecR (200 aa).

The segment at 59–74 (CSVCFHLSADPVCDIC) adopts a C4-type zinc-finger fold. One can recognise a Toprim domain in the interval 82-176 (TVICVVADSR…RVTRIAFGLP (95 aa)).

It belongs to the RecR family.

Its function is as follows. May play a role in DNA repair. It seems to be involved in an RecBC-independent recombinational process of DNA repair. It may act with RecF and RecO. The chain is Recombination protein RecR from Acaryochloris marina (strain MBIC 11017).